A 158-amino-acid polypeptide reads, in one-letter code: 6,7-dimethyl-8-ribityllumazine synthase (158 aa).

5-amino-6-(D-ribitylamino)uracil-binding positions include F23, 61-63 (SFE), and 85-87 (AVI). 90–91 (DT) provides a ligand contact to (2S)-2-hydroxy-3-oxobutyl phosphate. H93 functions as the Proton donor in the catalytic mechanism. F118 serves as a coordination point for 5-amino-6-(D-ribitylamino)uracil. R132 contributes to the (2S)-2-hydroxy-3-oxobutyl phosphate binding site.

It belongs to the DMRL synthase family.

The catalysed reaction is (2S)-2-hydroxy-3-oxobutyl phosphate + 5-amino-6-(D-ribitylamino)uracil = 6,7-dimethyl-8-(1-D-ribityl)lumazine + phosphate + 2 H2O + H(+). It participates in cofactor biosynthesis; riboflavin biosynthesis; riboflavin from 2-hydroxy-3-oxobutyl phosphate and 5-amino-6-(D-ribitylamino)uracil: step 1/2. Catalyzes the formation of 6,7-dimethyl-8-ribityllumazine by condensation of 5-amino-6-(D-ribitylamino)uracil with 3,4-dihydroxy-2-butanone 4-phosphate. This is the penultimate step in the biosynthesis of riboflavin. The chain is 6,7-dimethyl-8-ribityllumazine synthase from Prochlorococcus marinus (strain NATL2A).